The chain runs to 373 residues: Probable G-protein coupled receptor 173 (373 aa).

The Extracellular portion of the chain corresponds to 1-26 (MANTTGEPEEVSGALSPPSASAYVKL). A glycan (N-linked (GlcNAc...) asparagine) is linked at Asn3. Residues 27-47 (VLLGLIMCVSLAGNAILSLLV) form a helical membrane-spanning segment. Over 48-59 (LKERALHKAPYY) the chain is Cytoplasmic. A helical membrane pass occupies residues 60–80 (FLLDLCLADGIRSAVCFPFVL). Residues 81-97 (ASVRHGSSWTFSALSCK) are Extracellular-facing. Residues Cys96 and Cys174 are joined by a disulfide bond. The chain crosses the membrane as a helical span at residues 98 to 118 (IVAFMAVLFCFHAAFMLFCIS). Over 119 to 139 (VTRYMAIAHHRFYAKRMTLWT) the chain is Cytoplasmic. A helical membrane pass occupies residues 140–160 (CAAVICMAWTLSVAMAFPPVF). Residues 161–188 (DVGTYKFIREEDQCIFEHRYFKANDTLG) are Extracellular-facing. The N-linked (GlcNAc...) asparagine glycan is linked to Asn184. A helical membrane pass occupies residues 189–209 (FMLMLAVLMAATHAVYGKLLL). The Cytoplasmic portion of the chain corresponds to 210–287 (FEYRHRKMKP…VKGEKQLGRM (78 aa)). A helical membrane pass occupies residues 288–308 (FYAITLLFLLLWSPYIVACYW). The Extracellular portion of the chain corresponds to 309–322 (RVFVKACAVPHRYL). A helical transmembrane segment spans residues 323–343 (ATAVWMSFAQAAVNPIVCFLL). At 344 to 373 (NKDLKKCLRTHAPCWGTGGAPAPREPYCVM) the chain is on the cytoplasmic side.

The protein belongs to the G-protein coupled receptor 1 family. In terms of tissue distribution, expressed in the ovary, specifically in granulosa cells of follicles that have passed the primary stage and in oocytes (at protein level). Expressed at high levels in brain. Lower levels in small intestine. In brain regions, detected in all regions tested. Highest levels in the cerebellum and cerebral cortex.

The protein localises to the cell membrane. Functionally, is a receptor for the SMIM20 derived peptides Phoenixin-14 and Phoenixin-20. It mediates the Phoenixin-14 and Phoenixin-20 augmentation of gonadotropin-releasing hormone (GNRH) signaling in the hypothalamus and pituitary gland. In the ovary, it mediates the effects of Phoenixin-14 and Phoenixin-20 induced granulosa cell proliferation during follicular growth. This is Probable G-protein coupled receptor 173 (GPR173) from Homo sapiens (Human).